Reading from the N-terminus, the 82-residue chain is ATP synthase subunit c, chloroplastic (82 aa).

A run of 2 helical transmembrane segments spans residues 7–27 (AASVIAAGLAVGLAAIGPGIG) and 57–77 (LAFMESLTIYGLVVALSLLFA).

Belongs to the ATPase C chain family. F-type ATPases have 2 components, F(1) - the catalytic core - and F(0) - the membrane proton channel. F(1) has five subunits: alpha(3), beta(3), gamma(1), delta(1), epsilon(1). F(0) has four main subunits: a(1), b(1), b'(1) and c(10-14). The alpha and beta chains form an alternating ring which encloses part of the gamma chain. F(1) is attached to F(0) by a central stalk formed by the gamma and epsilon chains, while a peripheral stalk is formed by the delta, b and b' chains.

Its subcellular location is the plastid. It localises to the chloroplast thylakoid membrane. In terms of biological role, f(1)F(0) ATP synthase produces ATP from ADP in the presence of a proton or sodium gradient. F-type ATPases consist of two structural domains, F(1) containing the extramembraneous catalytic core and F(0) containing the membrane proton channel, linked together by a central stalk and a peripheral stalk. During catalysis, ATP synthesis in the catalytic domain of F(1) is coupled via a rotary mechanism of the central stalk subunits to proton translocation. Functionally, key component of the F(0) channel; it plays a direct role in translocation across the membrane. A homomeric c-ring of between 10-14 subunits forms the central stalk rotor element with the F(1) delta and epsilon subunits. This is ATP synthase subunit c, chloroplastic from Porphyra purpurea (Red seaweed).